The chain runs to 484 residues: Aspartyl aminopeptidase (484 aa).

At Met-1 the chain carries N-acetylmethionine. His-84 provides a ligand contact to Zn(2+). A substrate-binding site is contributed by His-159. Low complexity predominate over residues 188–206 (PVESKSTTTTTTTESPKTS). Positions 188–213 (PVESKSTTTTTTTESPKTSDPQDVNS) are disordered. Residue Asp-266 coordinates Zn(2+). Glu-301 is a substrate binding site. Positions 302 and 354 each coordinate Zn(2+). Substrate is bound by residues Asp-354, His-357, Lys-382, and Tyr-389. A Zn(2+)-binding site is contributed by His-448.

It belongs to the peptidase M18 family. As to quaternary structure, tetrahedron-shaped homododecamer built from six homodimers. The cofactor is Zn(2+).

Its subcellular location is the cytoplasm. The catalysed reaction is Release of an N-terminal aspartate or glutamate from a peptide, with a preference for aspartate.. Functionally, likely to play an important role in intracellular protein and peptide metabolism. The sequence is that of Aspartyl aminopeptidase (dnpep) from Dictyostelium discoideum (Social amoeba).